The chain runs to 637 residues: Anthranilate synthase, phenazine specific (637 aa).

Residues 1–434 (MSQTAAHLME…QREQIQADFS (434 aa)) form an anthranilate synthase component I region. The Glutamine amidotransferase type-1 domain maps to 437–628 (QVLIVDAEDT…LRHALIHTPV (192 aa)). Active-site for GATase activity residues include Cys517, His602, and Glu604.

The catalysed reaction is chorismate + L-glutamine = anthranilate + pyruvate + L-glutamate + H(+). It functions in the pathway antibiotic biosynthesis; phenazine biosynthesis. Involved in the biosynthesis of the antibiotic, phenazine, a nitrogen-containing heterocyclic molecule having important roles in virulence, competition and biological control. The chain is Anthranilate synthase, phenazine specific (phzB) from Pseudomonas chlororaphis (Pseudomonas aureofaciens).